The chain runs to 695 residues: Transketolase (695 aa).

His37 lines the substrate pocket. Residues His77 and 126-128 (GPL) contribute to the thiamine diphosphate site. Asp164 contributes to the Mg(2+) binding site. The thiamine diphosphate site is built by Gly165 and Asn194. Mg(2+) contacts are provided by Asn194 and Ile196. Positions 268, 361, and 388 each coordinate substrate. His268 contacts thiamine diphosphate. Glu415 functions as the Proton donor in the catalytic mechanism. Phe441 lines the thiamine diphosphate pocket. Residues His465, Asp473, and Arg524 each contribute to the substrate site.

Belongs to the transketolase family. As to quaternary structure, homodimer. It depends on Mg(2+) as a cofactor. The cofactor is Ca(2+). Mn(2+) serves as cofactor. Requires Co(2+) as cofactor. Thiamine diphosphate is required as a cofactor.

The catalysed reaction is D-sedoheptulose 7-phosphate + D-glyceraldehyde 3-phosphate = aldehydo-D-ribose 5-phosphate + D-xylulose 5-phosphate. It participates in carbohydrate biosynthesis; Calvin cycle. In terms of biological role, catalyzes the transfer of a two-carbon ketol group from a ketose donor to an aldose acceptor, via a covalent intermediate with the cofactor thiamine pyrophosphate. The sequence is that of Transketolase (cbbT) from Sinorhizobium medicae (strain WSM419) (Ensifer medicae).